We begin with the raw amino-acid sequence, 279 residues long: Tryptophan synthase alpha chain (279 aa).

Catalysis depends on proton acceptor residues Glu-50 and Asp-61.

This sequence belongs to the TrpA family. As to quaternary structure, tetramer of two alpha and two beta chains.

The catalysed reaction is (1S,2R)-1-C-(indol-3-yl)glycerol 3-phosphate + L-serine = D-glyceraldehyde 3-phosphate + L-tryptophan + H2O. It participates in amino-acid biosynthesis; L-tryptophan biosynthesis; L-tryptophan from chorismate: step 5/5. Functionally, the alpha subunit is responsible for the aldol cleavage of indoleglycerol phosphate to indole and glyceraldehyde 3-phosphate. In Brucella suis (strain ATCC 23445 / NCTC 10510), this protein is Tryptophan synthase alpha chain.